We begin with the raw amino-acid sequence, 163 residues long: Small heat shock protein C1 (163 aa).

A sHSP domain is found at 55–163 (MFYESSSIKS…EQDAKEITIN (109 aa)).

The protein belongs to the small heat shock protein (HSP20) family.

This chain is Small heat shock protein C1 (hspC1), found in Rickettsia typhi (strain ATCC VR-144 / Wilmington).